Reading from the N-terminus, the 203-residue chain is Putative GPI-anchored protein YHR214W (203 aa).

The signal sequence occupies residues 1-23 (MFNRFNKFQAAVALALLSRGALG). N-linked (GlcNAc...) asparagine glycosylation is found at Asn-28 and Asn-138. Asn-184 carries GPI-anchor amidated asparagine lipidation. Residues 185–203 (AGTFSLSNAILNGGSVSGL) constitute a propeptide, removed in mature form.

The protein resides in the cell membrane. The protein is Putative GPI-anchored protein YHR214W of Saccharomyces cerevisiae (strain ATCC 204508 / S288c) (Baker's yeast).